The following is an 89-amino-acid chain: Small ribosomal subunit protein uS15 (89 aa).

It belongs to the universal ribosomal protein uS15 family. As to quaternary structure, part of the 30S ribosomal subunit. Forms a bridge to the 50S subunit in the 70S ribosome, contacting the 23S rRNA.

Functionally, one of the primary rRNA binding proteins, it binds directly to 16S rRNA where it helps nucleate assembly of the platform of the 30S subunit by binding and bridging several RNA helices of the 16S rRNA. Its function is as follows. Forms an intersubunit bridge (bridge B4) with the 23S rRNA of the 50S subunit in the ribosome. In Buchnera aphidicola subsp. Cinara cedri (strain Cc), this protein is Small ribosomal subunit protein uS15.